A 185-amino-acid polypeptide reads, in one-letter code: Translation initiation factor IF-3 (185 aa).

This sequence belongs to the IF-3 family. As to quaternary structure, monomer.

Its subcellular location is the cytoplasm. Its function is as follows. IF-3 binds to the 30S ribosomal subunit and shifts the equilibrium between 70S ribosomes and their 50S and 30S subunits in favor of the free subunits, thus enhancing the availability of 30S subunits on which protein synthesis initiation begins. This chain is Translation initiation factor IF-3, found in Coxiella burnetii (strain RSA 493 / Nine Mile phase I).